The following is a 166-amino-acid chain: Transcriptional repressor NrdR (166 aa).

A zinc finger lies at 3–34 (CPFCHFVETDVIDTRKLYEGEVIRRRRRCRAC). The ATP-cone domain maps to 49-139 (LMVVKKDGTR…VYRAFTDIGK (91 aa)).

Belongs to the NrdR family. Zn(2+) serves as cofactor.

In terms of biological role, negatively regulates transcription of bacterial ribonucleotide reductase nrd genes and operons by binding to NrdR-boxes. This Chloroflexus aurantiacus (strain ATCC 29364 / DSM 637 / Y-400-fl) protein is Transcriptional repressor NrdR.